The primary structure comprises 325 residues: uncharacterized protein (325 aa).

2 stretches are compositionally biased toward polar residues: residues 1-21 and 29-57; these read MSYQQRANDSMNSAKQYSSSA and EPFSSSGAPQNRNFDTSYTSEIPSNSSRA. Residues 1–325 are disordered; the sequence is MSYQQRANDS…LKTGHHSERY (325 aa). Residues 86–109 are compositionally biased toward basic and acidic residues; it reads ESRKKEQSDVRGGDTSYSRRHDDS. Composition is skewed to polar residues over residues 114-167 and 174-193; these read NKYS…TTQG and YSQSYPTDTYGSRQKATPSD. Composition is skewed to low complexity over residues 200–210 and 252–278; these read YDYSSSGSHTH and ATDTTAEANRRAATGTRNARTTAQRNA. Basic and acidic residues predominate over residues 282–325; that stretch reads EDEHVSMGDKMKGNMEKMAGKLTRDPELVQKGEDLKTGHHSERY.

This is an uncharacterized protein from Schizosaccharomyces pombe (strain 972 / ATCC 24843) (Fission yeast).